Reading from the N-terminus, the 220-residue chain is Ribose-5-phosphate isomerase A (220 aa).

Substrate contacts are provided by residues T28–T31, D81–D84, and K94–G97. The active-site Proton acceptor is the E103. K121 contacts substrate.

Belongs to the ribose 5-phosphate isomerase family. Homodimer.

The catalysed reaction is aldehydo-D-ribose 5-phosphate = D-ribulose 5-phosphate. It functions in the pathway carbohydrate degradation; pentose phosphate pathway; D-ribose 5-phosphate from D-ribulose 5-phosphate (non-oxidative stage): step 1/1. Functionally, catalyzes the reversible conversion of ribose-5-phosphate to ribulose 5-phosphate. The sequence is that of Ribose-5-phosphate isomerase A from Leptothrix cholodnii (strain ATCC 51168 / LMG 8142 / SP-6) (Leptothrix discophora (strain SP-6)).